Reading from the N-terminus, the 1165-residue chain is Linoleate diol synthase (1165 aa).

Residues 104–448 (TDGLINDLWD…DGAFDDTELV (345 aa)) form a fatty acid alpha-dioxygenase region. His203 contributes to the heme b binding site. Residues Asp204, Ser219, Tyr221, Asp223, and Ser225 each contribute to the Ca(2+) site. Residue Tyr376 is part of the active site. His379 lines the heme b pocket. Positions 666 to 1161 (EVLSNQKDYK…ATTMKINWEG (496 aa)) are epoxy alcohol synthase. Cys1080 is a binding site for heme. A disordered region spans residues 1114-1134 (RSYPASQWPGQAGRPPRDPAW).

This sequence belongs to the peroxidase family. In terms of assembly, homotetramer. Heme b is required as a cofactor. Requires Ca(2+) as cofactor. It depends on heme as a cofactor. In terms of processing, the N-terminus is blocked.

It carries out the reaction (9Z,12Z)-octadecadienoate + O2 = (8R,9Z,12Z)-8-hydroperoxyoctadeca-9,12-dienoate. The enzyme catalyses (8R,9Z,12Z)-8-hydroperoxyoctadeca-9,12-dienoate = (7S,8S,9Z,12Z)-7,8-dihydroxyoctadeca-9,12-dienoate. Functionally, 7,8-linoleate diol synthase is a bifunctional enzyme that converts linoleic acid (18:2n-6) into 8-hydroperoxy-8(E),12(Z)-octadecadienoic acid (8-HPODE) and then catalyzes the isomerization of the resulting hydroperoxide to 7,8-dihydroxy-9(Z),12(Z)-octadecadienoic acid (7,8-DiHODE). This chain is Linoleate diol synthase, found in Gaeumannomyces graminis (Turf grass take-all root rot fungus).